A 568-amino-acid polypeptide reads, in one-letter code: DNA mismatch repair protein MutL (568 aa).

Belongs to the DNA mismatch repair MutL/HexB family.

In terms of biological role, this protein is involved in the repair of mismatches in DNA. It is required for dam-dependent methyl-directed DNA mismatch repair. May act as a 'molecular matchmaker', a protein that promotes the formation of a stable complex between two or more DNA-binding proteins in an ATP-dependent manner without itself being part of a final effector complex. The protein is DNA mismatch repair protein MutL of Thermosipho africanus (strain TCF52B).